A 164-amino-acid chain; its full sequence is UPF0304 protein YfbU (164 aa).

The protein belongs to the UPF0304 family.

This chain is UPF0304 protein YfbU (yfbU), found in Escherichia coli O6:H1 (strain CFT073 / ATCC 700928 / UPEC).